The following is a 608-amino-acid chain: Probable cytosolic Fe-S cluster assembly factor SPAC806.02c (608 aa).

ATP is bound at residue 13–20 (GKGGVGKS). [4Fe-4S] cluster-binding residues include C201 and C204. WD repeat units follow at residues 288–327 (GHTGRLWSVAAHPMLPLFATSSQDKSVRIYNSNTYNLVHV), 331–371 (FHTR…WECT), 376–415 (GHENEVKCIAWSCNGNYLATCSRDKSVWIWEATEDDEFDC), 421–460 (EHTQDVKVVTWHPTEDLLVSGSYDNSICFWRDDGDDWALT), 465–504 (GHTNTVWALAFSPNGNTLASADNDGNVFLWIKISSNEDVA), 529–567 (IHKGAVYTISWMNDATLCSAGGDGKIVVYQREKHDEALW), and 576–608 (AHGVYEINSLEYLRDDRLLSGGDDGECRVWSFK).

It in the N-terminal section; belongs to the Mrp/NBP35 ATP-binding proteins family. NUBP2/CFD1 subfamily. This sequence in the C-terminal section; belongs to the WD repeat CIA1 family. As to quaternary structure, heterotetramer of 2 nbp35 and 2 SPAC806.02c chains. [4Fe-4S] cluster is required as a cofactor.

The protein localises to the cytoplasm. The protein resides in the nucleus. Functionally, fusion protein of two essential components of the cytosolic iron-sulfur (Fe/S) protein assembly (CIA) machinery. Required for maturation of extramitochondrial Fe-S proteins. May form a heterotetramer with nubp35, functioning as a Fe-S scaffold complex, mediating the de novo assembly of an Fe-S cluster and its transfer to target apoproteins. The polypeptide is Probable cytosolic Fe-S cluster assembly factor SPAC806.02c (Schizosaccharomyces pombe (strain 972 / ATCC 24843) (Fission yeast)).